The chain runs to 311 residues: Probable manganese-dependent inorganic pyrophosphatase (311 aa).

The Mn(2+) site is built by H9, D13, D15, D77, H99, and D151.

Belongs to the PPase class C family. Mn(2+) is required as a cofactor.

Its subcellular location is the cytoplasm. The enzyme catalyses diphosphate + H2O = 2 phosphate + H(+). The polypeptide is Probable manganese-dependent inorganic pyrophosphatase (Streptococcus suis (strain 98HAH33)).